Consider the following 571-residue polypeptide: Proline--tRNA ligase (571 aa).

The protein belongs to the class-II aminoacyl-tRNA synthetase family. ProS type 1 subfamily. In terms of assembly, homodimer.

The protein resides in the cytoplasm. The enzyme catalyses tRNA(Pro) + L-proline + ATP = L-prolyl-tRNA(Pro) + AMP + diphosphate. Its function is as follows. Catalyzes the attachment of proline to tRNA(Pro) in a two-step reaction: proline is first activated by ATP to form Pro-AMP and then transferred to the acceptor end of tRNA(Pro). As ProRS can inadvertently accommodate and process non-cognate amino acids such as alanine and cysteine, to avoid such errors it has two additional distinct editing activities against alanine. One activity is designated as 'pretransfer' editing and involves the tRNA(Pro)-independent hydrolysis of activated Ala-AMP. The other activity is designated 'posttransfer' editing and involves deacylation of mischarged Ala-tRNA(Pro). The misacylated Cys-tRNA(Pro) is not edited by ProRS. This Buchnera aphidicola subsp. Schizaphis graminum (strain Sg) protein is Proline--tRNA ligase.